A 291-amino-acid chain; its full sequence is ATP synthase gamma chain (291 aa).

Belongs to the ATPase gamma chain family. In terms of assembly, F-type ATPases have 2 components, CF(1) - the catalytic core - and CF(0) - the membrane proton channel. CF(1) has five subunits: alpha(3), beta(3), gamma(1), delta(1), epsilon(1). CF(0) has three main subunits: a, b and c.

Its subcellular location is the cell membrane. Produces ATP from ADP in the presence of a proton gradient across the membrane. The gamma chain is believed to be important in regulating ATPase activity and the flow of protons through the CF(0) complex. The polypeptide is ATP synthase gamma chain (Streptococcus uberis (strain ATCC BAA-854 / 0140J)).